We begin with the raw amino-acid sequence, 702 residues long: Palmitoyltransferase AKR1 (702 aa).

Over residues 1–40 (MSTDAELQTISGLSVASKSAPSTQTEGVTASGKVESTTNA) the composition is skewed to polar residues. Positions 1–51 (MSTDAELQTISGLSVASKSAPSTQTEGVTASGKVESTTNAEEATSDVEEEE) are disordered. The Cytoplasmic segment spans residues 1 to 299 (MSTDAELQTI…TTNLLCFFTP (299 aa)). ANK repeat units follow at residues 49–80 (EEENPLVVAARDGNTAEVKRLCESGSYSVLDT), 83–112 (DGVTALHWAAVNNRISTCQYLVEQGAVVDA), 117–147 (LNGTPLHWACRRGLVYIVHYLIQNGADPLRS), 150–179 (QGYNALHLATHSSNVMLLVYLLHQGLPVDC), 183–212 (NGRTALHWAAYQGDALSVDVLLRWGSDVKI), and 216–245 (QGFLPLHWGIVNGSRNSLARLIEEGSDMYA). 2 helical membrane passes run 300-320 (FILILLGLVLCTFCGPIFGII) and 321-341 (LTVATLFGSIKLLKTLVLPSL). Over 342 to 354 (YNGHAALLKSPFQ) the chain is Cytoplasmic. A helical transmembrane segment spans residues 355 to 375 (AGIFTGSAFWVTVKYLTSVLP). Residues 376–379 (ATFA) are Lumenal-facing. The chain crosses the membrane as a helical span at residues 380-400 (SHPILNFFFASIFGLAMYCFF). Over 401-479 (RCMSMDPGYI…WNAIGVRNHR (79 aa)) the chain is Cytoplasmic. The region spanning 436 to 486 (HFCFVTYVRKPLRSKFCRQSKRVVARFDHFCPWVWNAIGVRNHRMFVLYVL) is the DHHC domain. The active-site S-palmitoyl cysteine intermediate is the cysteine 466. The chain crosses the membrane as a helical span at residues 480-500 (MFVLYVLFLQIGIPLWLALNS). Residues 501 to 518 (AYFGELLEIKRWDPLEFY) lie on the Lumenal side of the membrane. Residues 519-539 (LVIWISLQLIWITFLSFVQIF) traverse the membrane as a helical segment. Residues 540–702 (QICRSLTTSE…GEALLAESQV (163 aa)) are Cytoplasmic-facing. Residues 679 to 702 (PNQQQTNNRSTREDGEALLAESQV) are disordered.

Belongs to the DHHC palmitoyltransferase family. AKR/ZDHHC17 subfamily.

It is found in the early endosome membrane. The protein resides in the golgi apparatus membrane. The enzyme catalyses L-cysteinyl-[protein] + hexadecanoyl-CoA = S-hexadecanoyl-L-cysteinyl-[protein] + CoA. Functionally, palmitoyltransferase specific for casein kinase 1. In Yarrowia lipolytica (strain CLIB 122 / E 150) (Yeast), this protein is Palmitoyltransferase AKR1 (AKR1).